The chain runs to 246 residues: Phosphomannomutase 2 (246 aa).

Alanine 2 carries the post-translational modification N-acetylalanine. Aspartate 12 serves as the catalytic Nucleophile. 2 residues coordinate Mg(2+): aspartate 12 and aspartate 14. The active-site Proton donor/acceptor is aspartate 14. The alpha-D-mannose 1-phosphate site is built by arginine 21, arginine 123, arginine 134, and arginine 141. An N6-acetyllysine modification is found at lysine 149. Residues serine 179 and aspartate 181 each coordinate alpha-D-mannose 1-phosphate. Mg(2+)-binding residues include aspartate 209, phenylalanine 221, aspartate 223, and threonine 226.

Belongs to the eukaryotic PMM family. In terms of assembly, homodimer.

It localises to the cytoplasm. The enzyme catalyses alpha-D-mannose 1-phosphate = D-mannose 6-phosphate. It participates in nucleotide-sugar biosynthesis; GDP-alpha-D-mannose biosynthesis; alpha-D-mannose 1-phosphate from D-fructose 6-phosphate: step 2/2. Functionally, involved in the synthesis of the GDP-mannose and dolichol-phosphate-mannose required for a number of critical mannosyl transfer reactions. This Homo sapiens (Human) protein is Phosphomannomutase 2 (PMM2).